A 151-amino-acid polypeptide reads, in one-letter code: Small ribosomal subunit protein uS19 (151 aa).

N-acetylalanine is present on Ala2.

This sequence belongs to the universal ribosomal protein uS19 family.

Functionally, negatively regulates lifespan. The protein is Small ribosomal subunit protein uS19 of Caenorhabditis elegans.